Here is a 396-residue protein sequence, read N- to C-terminus: Putative peptide chain release factor 1, mitochondrial (396 aa).

Glutamine 270 carries the N5-methylglutamine modification.

This sequence belongs to the prokaryotic/mitochondrial release factor family. Methylation of glutamine in the GGQ triplet is conserved from bacteria to mammals.

It localises to the mitochondrion. The polypeptide is Putative peptide chain release factor 1, mitochondrial (Schizosaccharomyces pombe (strain 972 / ATCC 24843) (Fission yeast)).